The chain runs to 432 residues: Fibrinogen gamma chain (432 aa).

The first 24 residues, 1–24 (MGRIGTPVFLAFLSALTCSLQVHA), serve as a signal peptide directing secretion. In terms of domain architecture, Fibrinogen C-terminal spans 169-412 (KISPITGKDC…MTTMKLLPMG (244 aa)). Residues C178 and C207 are joined by a disulfide bond. N-linked (GlcNAc...) asparagine glycosylation is present at N227. The Ca(2+) site is built by D340, D342, Y344, and G346. The cysteines at positions 348 and 361 are disulfide-linked. The disordered stretch occupies residues 413-432 (RDLSGHGGQQQSKGNSRGDN). Positions 421 to 432 (QQQSKGNSRGDN) are enriched in polar residues.

Heterohexamer; disulfide linked. Contains 2 sets of 3 non-identical chains (alpha, beta and gamma). The 2 heterotrimers are in head to head conformation with the N-termini in a small central domain. Conversion of fibrinogen to fibrin is triggered by thrombin, which cleaves fibrinopeptides A and B from alpha and beta chains, and thus exposes the N-terminal polymerization sites responsible for the formation of the soft clot. The soft clot is converted into the hard clot by factor XIIIA which catalyzes the epsilon-(gamma-glutamyl)lysine cross-linking between gamma chains (stronger) and between alpha chains (weaker) of different monomers.

Its subcellular location is the secreted. In terms of biological role, together with fibrinogen alpha (FGA) and fibrinogen beta (FGB), polymerizes to form an insoluble fibrin matrix. Has a major function in hemostasis as one of the primary components of blood clots. This Petromyzon marinus (Sea lamprey) protein is Fibrinogen gamma chain (FGG).